The following is a 1216-amino-acid chain: Tyrosine-protein kinase receptor ver-4 (1216 aa).

Residues 1–789 lie on the Extracellular side of the membrane; the sequence is MRVSLTEFLV…VKVAGASSSS (789 aa). 16 N-linked (GlcNAc...) asparagine glycosylation sites follow: Asn142, Asn195, Asn206, Asn245, Asn283, Asn333, Asn348, Asn384, Asn402, Asn412, Asn496, Asn508, Asn588, Asn599, Asn664, and Asn703. 2 consecutive Ig-like C2-type domains span residues 596 to 691 and 697 to 783; these read KSVN…TSIS and PPFL…VKVA. Cys619 and Cys675 form a disulfide bridge. Cys721 and Cys765 form a disulfide bridge. The helical transmembrane segment at 790–810 threads the bilayer; the sequence is FFWLFITFFAFVVVGIVVSLL. The Cytoplasmic segment spans residues 811 to 1216; the sequence is WKLFGQKDLK…WVQKPTQLFF (406 aa). Residues 870-1181 enclose the Protein kinase domain; sequence LEILETLGSG…IKLFKNHIQY (312 aa). ATP is bound by residues 876–884 and Lys908; that span reads LGSGQFGIV. Asp1042 (proton acceptor) is an active-site residue.

This sequence belongs to the protein kinase superfamily. Tyr protein kinase family.

The protein localises to the cell membrane. The catalysed reaction is L-tyrosyl-[protein] + ATP = O-phospho-L-tyrosyl-[protein] + ADP + H(+). In terms of biological role, receptor tyrosine kinase which may be involved, downstream of pvf-1, in the positioning of ray 1, the most anterior ray sensillum in the male tail. The polypeptide is Tyrosine-protein kinase receptor ver-4 (Caenorhabditis elegans).